The primary structure comprises 157 residues: AM-toxin biosynthesis protein 15 (157 aa).

The interval 17–43 (RARHWDSKQGSSNSDVASGGSEVAGNS) is disordered.

The protein operates within mycotoxin biosynthesis. Its function is as follows. Part of the gene clusters that mediate the biosynthesis of AM-toxins, host-selective toxins (HSTs) causing Alternaria blotch on apple, a worldwide distributed disease. AM-toxins are cyclic depsipeptides containing the 3 residues 2-hydroxy-isovaleric acid (2-HIV), dehydroalanine, L-alanine which are common for all 3 AM-toxins I to III. The fourth precursor is L-alpha-amino-methoxyphenyl-valeric acid (L-Amv) for AM-toxin I, L-alpha-amino-phenyl-valeric acid (L-Apv) for AM-toxin II, and L-alpha-amino-hydroxyphenyl-valeric acid (L-Ahv) for AM-toxin III. AM-toxins have two target sites for affecting susceptible apple cells; they cause invagination of the plasma membrane and electrolyte loss and chloroplast disorganization. The non-ribosomal peptide synthetase AMT1 contains 4 catalytic modules and is responsible for activation of each residue in AM-toxin. The aldo-keto reductase AMT2 catalyzes the conversion of 2-keto-isovaleric acid (2-KIV) to 2-hydroxy-isovaleric acid (2-HIV), one of the precursor residues incorporated by AMT1 during AM-toxin biosynthesis, by reduction of its ketone to an alcohol. The cytochrome P450 monooxygenase AMT3 and the thioesterase AMT4 are also important for AM-toxin production, but their exact function within the AM-toxin biosynthesis are not known yet. Up to 21 proteins (including AMT1 to AMT4) are predicted to be involved in AM-toxin biosynthesis since their expression ishighly up-regulated in AM-toxin-producing cultures. The protein is AM-toxin biosynthesis protein 15 of Alternaria alternata (Alternaria rot fungus).